Here is a 534-residue protein sequence, read N- to C-terminus: GMP synthase [glutamine-hydrolyzing] (534 aa).

The region spanning lysine 4 to aspartate 202 is the Glutamine amidotransferase type-1 domain. The active-site Nucleophile is cysteine 81. Residues histidine 176 and glutamate 178 contribute to the active site. The GMPS ATP-PPase domain occupies tryptophan 203 to arginine 402. An ATP-binding site is contributed by serine 230–serine 236.

In terms of assembly, homodimer.

The catalysed reaction is XMP + L-glutamine + ATP + H2O = GMP + L-glutamate + AMP + diphosphate + 2 H(+). It participates in purine metabolism; GMP biosynthesis; GMP from XMP (L-Gln route): step 1/1. In terms of biological role, catalyzes the synthesis of GMP from XMP. The chain is GMP synthase [glutamine-hydrolyzing] from Methylibium petroleiphilum (strain ATCC BAA-1232 / LMG 22953 / PM1).